The following is a 546-amino-acid chain: Chaperonin GroEL 2 (546 aa).

Residues 30-33 (TLGP), Lys-51, 87-91 (DGTTT), Gly-415, and Asp-495 contribute to the ATP site. The interval 527 to 546 (DAAPATAPGGPGAGGPGFDF) is disordered. The span at 535–546 (GGPGAGGPGFDF) shows a compositional bias: gly residues.

This sequence belongs to the chaperonin (HSP60) family. In terms of assembly, forms a cylinder of 14 subunits composed of two heptameric rings stacked back-to-back. Interacts with the co-chaperonin GroES.

The protein resides in the cytoplasm. It catalyses the reaction ATP + H2O + a folded polypeptide = ADP + phosphate + an unfolded polypeptide.. In terms of biological role, together with its co-chaperonin GroES, plays an essential role in assisting protein folding. The GroEL-GroES system forms a nano-cage that allows encapsulation of the non-native substrate proteins and provides a physical environment optimized to promote and accelerate protein folding. This Burkholderia ambifaria (strain ATCC BAA-244 / DSM 16087 / CCUG 44356 / LMG 19182 / AMMD) (Burkholderia cepacia (strain AMMD)) protein is Chaperonin GroEL 2.